The sequence spans 341 residues: Uroporphyrinogen decarboxylase (341 aa).

Substrate-binding positions include arginine 26–arginine 30, aspartate 75, tyrosine 150, serine 205, and histidine 318.

It belongs to the uroporphyrinogen decarboxylase family. In terms of assembly, homodimer.

It localises to the cytoplasm. It carries out the reaction uroporphyrinogen III + 4 H(+) = coproporphyrinogen III + 4 CO2. It functions in the pathway porphyrin-containing compound metabolism; protoporphyrin-IX biosynthesis; coproporphyrinogen-III from 5-aminolevulinate: step 4/4. In terms of biological role, catalyzes the decarboxylation of four acetate groups of uroporphyrinogen-III to yield coproporphyrinogen-III. This is Uroporphyrinogen decarboxylase from Thermus thermophilus (strain ATCC 27634 / DSM 579 / HB8).